Reading from the N-terminus, the 420-residue chain is Protein translocase subunit SecY (420 aa).

The next 10 membrane-spanning stretches (helical) occupy residues 9 to 29, 61 to 81, 104 to 124, 141 to 161, 173 to 193, 203 to 223, 257 to 277, 300 to 320, 355 to 375, and 377 to 397; these read ILIT…PIPG, LSII…MELL, IVRY…SVGL, VFMI…MWIG, ISLI…SGTF, ILML…IIYV, LSGV…STIL, YNIL…SIVF, KLTL…WILV, and AMGV…QVAI.

The protein belongs to the SecY/SEC61-alpha family. In terms of assembly, component of the Sec protein translocase complex. Heterotrimer consisting of SecY, SecE and SecG subunits. The heterotrimers can form oligomers, although 1 heterotrimer is thought to be able to translocate proteins. Interacts with the ribosome. Interacts with SecDF, and other proteins may be involved. Interacts with SecA.

It localises to the cell inner membrane. The central subunit of the protein translocation channel SecYEG. Consists of two halves formed by TMs 1-5 and 6-10. These two domains form a lateral gate at the front which open onto the bilayer between TMs 2 and 7, and are clamped together by SecE at the back. The channel is closed by both a pore ring composed of hydrophobic SecY resides and a short helix (helix 2A) on the extracellular side of the membrane which forms a plug. The plug probably moves laterally to allow the channel to open. The ring and the pore may move independently. The protein is Protein translocase subunit SecY of Helicobacter pylori (strain ATCC 700392 / 26695) (Campylobacter pylori).